The chain runs to 106 residues: Large ribosomal subunit protein uL30 (106 aa).

Belongs to the universal ribosomal protein uL30 family. In terms of assembly, part of the 50S ribosomal subunit.

This chain is Large ribosomal subunit protein uL30, found in Ruthia magnifica subsp. Calyptogena magnifica.